A 445-amino-acid chain; its full sequence is N-succinylarginine dihydrolase (445 aa).

Residues 19-28 (AGLSFGNVAS), Asn-110, and 137-138 (HR) contribute to the substrate site. The active site involves Glu-174. Residue Arg-214 coordinates substrate. Residue His-250 is part of the active site. Asp-252 and Asn-363 together coordinate substrate. Cys-369 acts as the Nucleophile in catalysis.

It belongs to the succinylarginine dihydrolase family. As to quaternary structure, homodimer.

The enzyme catalyses N(2)-succinyl-L-arginine + 2 H2O + 2 H(+) = N(2)-succinyl-L-ornithine + 2 NH4(+) + CO2. It functions in the pathway amino-acid degradation; L-arginine degradation via AST pathway; L-glutamate and succinate from L-arginine: step 2/5. Its function is as follows. Catalyzes the hydrolysis of N(2)-succinylarginine into N(2)-succinylornithine, ammonia and CO(2). In Shewanella pealeana (strain ATCC 700345 / ANG-SQ1), this protein is N-succinylarginine dihydrolase.